Here is a 120-residue protein sequence, read N- to C-terminus: MFILEGYDSFVVFFIVACLVPILALSGSKLIRPKLSGIEKKMTYESGIEPMGEAWVQFNIRYYMFALIFVIFDVETLFLYPWAIVFKDLGITAFLETLIFLSILIIGLVYAWRKGALEWS.

Transmembrane regions (helical) follow at residues 11–31 (VVFFIVACLVPILALSGSKLI), 65–85 (FALIFVIFDVETLFLYPWAIV), and 89–109 (LGITAFLETLIFLSILIIGLV).

It belongs to the complex I subunit 3 family. NDH is composed of at least 16 different subunits, 5 of which are encoded in the nucleus.

Its subcellular location is the plastid. The protein resides in the chloroplast thylakoid membrane. The catalysed reaction is a plastoquinone + NADH + (n+1) H(+)(in) = a plastoquinol + NAD(+) + n H(+)(out). It carries out the reaction a plastoquinone + NADPH + (n+1) H(+)(in) = a plastoquinol + NADP(+) + n H(+)(out). In terms of biological role, NDH shuttles electrons from NAD(P)H:plastoquinone, via FMN and iron-sulfur (Fe-S) centers, to quinones in the photosynthetic chain and possibly in a chloroplast respiratory chain. The immediate electron acceptor for the enzyme in this species is believed to be plastoquinone. Couples the redox reaction to proton translocation, and thus conserves the redox energy in a proton gradient. The protein is NAD(P)H-quinone oxidoreductase subunit 3, chloroplastic of Mesostigma viride (Green alga).